A 521-amino-acid polypeptide reads, in one-letter code: Ribonuclease Y (521 aa).

The chain crosses the membrane as a helical span at residues 3-23; the sequence is VSIWMLVITVLAAVAAYFAGS. The KH domain maps to 211 to 271; it reads TVSVVPLPSD…VRREVARMSL (61 aa). The region spanning 337–430 is the HD domain; that stretch reads IYQHSLEVAF…VQAADALSGA (94 aa).

It belongs to the RNase Y family.

It localises to the cell membrane. Functionally, endoribonuclease that initiates mRNA decay. This Pelobacter propionicus (strain DSM 2379 / NBRC 103807 / OttBd1) protein is Ribonuclease Y.